A 394-amino-acid chain; its full sequence is 1-deoxy-D-xylulose 5-phosphate reductoisomerase (394 aa).

Positions 6, 7, 8, 9, 32, and 124 each coordinate NADPH. 1-deoxy-D-xylulose 5-phosphate is bound at residue K125. NADPH is bound at residue E126. D148 contacts Mn(2+). Positions 149, 150, 174, and 197 each coordinate 1-deoxy-D-xylulose 5-phosphate. E150 lines the Mn(2+) pocket. G203 contributes to the NADPH binding site. Residues S210, N215, K216, and E219 each coordinate 1-deoxy-D-xylulose 5-phosphate. Residue E219 participates in Mn(2+) binding.

This sequence belongs to the DXR family. Requires Mg(2+) as cofactor. Mn(2+) is required as a cofactor.

The enzyme catalyses 2-C-methyl-D-erythritol 4-phosphate + NADP(+) = 1-deoxy-D-xylulose 5-phosphate + NADPH + H(+). It participates in isoprenoid biosynthesis; isopentenyl diphosphate biosynthesis via DXP pathway; isopentenyl diphosphate from 1-deoxy-D-xylulose 5-phosphate: step 1/6. In terms of biological role, catalyzes the NADPH-dependent rearrangement and reduction of 1-deoxy-D-xylulose-5-phosphate (DXP) to 2-C-methyl-D-erythritol 4-phosphate (MEP). The polypeptide is 1-deoxy-D-xylulose 5-phosphate reductoisomerase (Streptomyces avermitilis (strain ATCC 31267 / DSM 46492 / JCM 5070 / NBRC 14893 / NCIMB 12804 / NRRL 8165 / MA-4680)).